The primary structure comprises 128 residues: Aspartate 1-decarboxylase (128 aa).

S25 serves as the catalytic Schiff-base intermediate with substrate; via pyruvic acid. S25 carries the pyruvic acid (Ser) modification. T57 contributes to the substrate binding site. Y58 serves as the catalytic Proton donor. 73 to 75 serves as a coordination point for substrate; sequence GSA.

The protein belongs to the PanD family. As to quaternary structure, heterooctamer of four alpha and four beta subunits. Requires pyruvate as cofactor. Post-translationally, is synthesized initially as an inactive proenzyme, which is activated by self-cleavage at a specific serine bond to produce a beta-subunit with a hydroxyl group at its C-terminus and an alpha-subunit with a pyruvoyl group at its N-terminus.

It localises to the cytoplasm. It catalyses the reaction L-aspartate + H(+) = beta-alanine + CO2. The protein operates within cofactor biosynthesis; (R)-pantothenate biosynthesis; beta-alanine from L-aspartate: step 1/1. Its function is as follows. Catalyzes the pyruvoyl-dependent decarboxylation of aspartate to produce beta-alanine. In Burkholderia pseudomallei (strain 668), this protein is Aspartate 1-decarboxylase.